Consider the following 280-residue polypeptide: Bifunctional protein FolD (280 aa).

NADP(+) is bound by residues 164 to 166 (GRS), Ser-189, and Val-230.

It belongs to the tetrahydrofolate dehydrogenase/cyclohydrolase family. As to quaternary structure, homodimer.

It catalyses the reaction (6R)-5,10-methylene-5,6,7,8-tetrahydrofolate + NADP(+) = (6R)-5,10-methenyltetrahydrofolate + NADPH. The catalysed reaction is (6R)-5,10-methenyltetrahydrofolate + H2O = (6R)-10-formyltetrahydrofolate + H(+). Its pathway is one-carbon metabolism; tetrahydrofolate interconversion. Its function is as follows. Catalyzes the oxidation of 5,10-methylenetetrahydrofolate to 5,10-methenyltetrahydrofolate and then the hydrolysis of 5,10-methenyltetrahydrofolate to 10-formyltetrahydrofolate. The sequence is that of Bifunctional protein FolD from Geotalea daltonii (strain DSM 22248 / JCM 15807 / FRC-32) (Geobacter daltonii).